Consider the following 205-residue polypeptide: MLTLALPKGRLAEESIDLMISKGWLSSKPDPNSKELIYNDPKGKIRILLVRSQDVATYVEQCAADAGISGWDVLKEGGYDLATPLDLKIGKCRLSLAAPNGFTLEAHHRKIRVATKYPNLAREFFFLKGLSCEIFKLYGSIELAPLVGLSDCIVDLVSTGGTLKANGLKELDIILESSARLVFNRSSLYGKRKEAVEFMDSLSKI.

Belongs to the ATP phosphoribosyltransferase family. Short subfamily. As to quaternary structure, heteromultimer composed of HisG and HisZ subunits.

The protein localises to the cytoplasm. It catalyses the reaction 1-(5-phospho-beta-D-ribosyl)-ATP + diphosphate = 5-phospho-alpha-D-ribose 1-diphosphate + ATP. It functions in the pathway amino-acid biosynthesis; L-histidine biosynthesis; L-histidine from 5-phospho-alpha-D-ribose 1-diphosphate: step 1/9. Its function is as follows. Catalyzes the condensation of ATP and 5-phosphoribose 1-diphosphate to form N'-(5'-phosphoribosyl)-ATP (PR-ATP). Has a crucial role in the pathway because the rate of histidine biosynthesis seems to be controlled primarily by regulation of HisG enzymatic activity. In Leptospira interrogans serogroup Icterohaemorrhagiae serovar Lai (strain 56601), this protein is ATP phosphoribosyltransferase.